A 423-amino-acid chain; its full sequence is Adenylosuccinate synthetase (423 aa).

Asp-12 (proton acceptor) is an active-site residue. Residues Asp-12 and Gly-39 each contribute to the Mg(2+) site. IMP contacts are provided by residues 37 to 40 (NAGH), Thr-129, Arg-143, Asn-221, Thr-236, and Arg-300. A GTP-binding site is contributed by 39-41 (GHS). The active-site Proton donor is His-40. 296 to 302 (VSTGRKR) is a binding site for substrate. Residues Arg-302, 328-330 (KLD), and 412-414 (GTG) each bind GTP.

It belongs to the adenylosuccinate synthetase family. In terms of assembly, homodimer. Mg(2+) is required as a cofactor.

The protein localises to the cytoplasm. It catalyses the reaction IMP + L-aspartate + GTP = N(6)-(1,2-dicarboxyethyl)-AMP + GDP + phosphate + 2 H(+). It functions in the pathway purine metabolism; AMP biosynthesis via de novo pathway; AMP from IMP: step 1/2. Its function is as follows. Plays an important role in the de novo pathway and in the salvage pathway of purine nucleotide biosynthesis. Catalyzes the first committed step in the biosynthesis of AMP from IMP. The polypeptide is Adenylosuccinate synthetase (Pyricularia oryzae (strain 70-15 / ATCC MYA-4617 / FGSC 8958) (Rice blast fungus)).